We begin with the raw amino-acid sequence, 274 residues long: 2,3,4,5-tetrahydropyridine-2,6-dicarboxylate N-succinyltransferase (274 aa).

Substrate-binding residues include arginine 104 and aspartate 141.

Belongs to the transferase hexapeptide repeat family. Homotrimer.

Its subcellular location is the cytoplasm. The catalysed reaction is (S)-2,3,4,5-tetrahydrodipicolinate + succinyl-CoA + H2O = (S)-2-succinylamino-6-oxoheptanedioate + CoA. The protein operates within amino-acid biosynthesis; L-lysine biosynthesis via DAP pathway; LL-2,6-diaminopimelate from (S)-tetrahydrodipicolinate (succinylase route): step 1/3. The sequence is that of 2,3,4,5-tetrahydropyridine-2,6-dicarboxylate N-succinyltransferase from Enterobacter sp. (strain 638).